The sequence spans 320 residues: Tabersonine synthase (320 aa).

The Involved in the stabilization of the negatively charged intermediate by the formation of the oxyanion hole signature appears at 78–80; the sequence is HGA. Position 81 (G81) interacts with (-)-tabersonine. Catalysis depends on S170, which acts as the Proton acceptor. D266 is a catalytic residue. Y297 contributes to the (-)-tabersonine binding site. Y297 acts as the Proton donor/acceptor in catalysis.

This sequence belongs to the 'GDXG' lipolytic enzyme family. In terms of assembly, interacts with dehydroprecondylocarpine acetate synthase (DPAS). In terms of tissue distribution, expressed in leaf epidermis.

It is found in the cytoplasm. The protein localises to the cytosol. It localises to the nucleus. It catalyses the reaction dehydrosecodine = (-)-tabersonine. It carries out the reaction dihydroprecondylocarpine acetate = (-)-tabersonine + acetate + H(+). It participates in alkaloid biosynthesis. Functionally, component of iboga and aspidosperma monoterpenoid indole alkaloids (MIAs, e.g. tabersonine and catharanthine) biosynthesis pathway from 19E-geissoschizine, psychoactive compounds likely to be used in the treatment of opioid dependence. Catalyzes the conversion of dehydrosecodine to tabersonine, a precursor of vindoline; this process starts with the conversion of dihydroprecondylocarpine acetate to dehydrosecodine. This is Tabersonine synthase from Catharanthus roseus (Madagascar periwinkle).